Reading from the N-terminus, the 432-residue chain is Patatin-like phospholipase domain-containing protein 5 (432 aa).

One can recognise a PNPLA domain in the interval 12–181 (LSFSGSGYMG…SNNLPFSDCP (170 aa)). Residues 16–21 (GSGYMG) carry the GXGXXG motif. Residues 47-51 (GSSSG) carry the GXSXG motif. The Nucleophile role is filled by serine 49. Residue aspartate 168 is the Proton acceptor of the active site. Residues 168–170 (DGA) carry the DGA/G motif. The disordered stretch occupies residues 404–423 (ADSGLLRQQRGTAPSGNRPL).

It carries out the reaction a triacylglycerol + H2O = a diacylglycerol + a fatty acid + H(+). Has abundant triacylglycerol lipase activity. The sequence is that of Patatin-like phospholipase domain-containing protein 5 from Mus musculus (Mouse).